The sequence spans 526 residues: Glucose-6-phosphate 1-dehydrogenase (526 aa).

NADP(+) contacts are provided by residues 50-57 (GASGDLAK), arginine 84, and lysine 184. Residues lysine 184, 214–218 (HYLGK), glutamate 252, and aspartate 271 contribute to the D-glucose 6-phosphate site. Catalysis depends on histidine 276, which acts as the Proton acceptor. Arginine 370 contributes to the NADP(+) binding site. Residues lysine 373 and arginine 378 each coordinate D-glucose 6-phosphate. NADP(+) is bound by residues lysine 379, arginine 383, and arginine 406. D-glucose 6-phosphate is bound at residue glutamine 408. NADP(+)-binding positions include 414 to 416 (YFK), 434 to 436 (DLT), arginine 500, tyrosine 516, and tryptophan 522.

This sequence belongs to the glucose-6-phosphate dehydrogenase family.

The protein localises to the cytoplasm. The protein resides in the cytosol. The catalysed reaction is D-glucose 6-phosphate + NADP(+) = 6-phospho-D-glucono-1,5-lactone + NADPH + H(+). It functions in the pathway carbohydrate degradation; pentose phosphate pathway; D-ribulose 5-phosphate from D-glucose 6-phosphate (oxidative stage): step 1/3. Cytosolic glucose-6-phosphate dehydrogenase that catalyzes the first and rate-limiting step of the oxidative branch within the pentose phosphate pathway/shunt, an alternative route to glycolysis for the dissimilation of carbohydrates and a major source of reducing power and metabolic intermediates for fatty acid and nucleic acid biosynthetic processes. This is Glucose-6-phosphate 1-dehydrogenase (ZW) from Ceratitis capitata (Mediterranean fruit fly).